An 862-amino-acid chain; its full sequence is Probable alpha,alpha-trehalose-phosphate synthase [UDP-forming] 11 (862 aa).

At serine 5 the chain carries Phosphoserine. The segment at proline 50–arginine 538 is glycosyltransferase. Residues serine 838–alanine 862 form a disordered region.

It in the N-terminal section; belongs to the glycosyltransferase 20 family. The protein in the C-terminal section; belongs to the trehalose phosphatase family. In terms of tissue distribution, expressed in leaves, roots, stems and flowers.

The catalysed reaction is D-glucose 6-phosphate + UDP-alpha-D-glucose = alpha,alpha-trehalose 6-phosphate + UDP + H(+). This is Probable alpha,alpha-trehalose-phosphate synthase [UDP-forming] 11 (TPS11) from Arabidopsis thaliana (Mouse-ear cress).